Here is a 186-residue protein sequence, read N- to C-terminus: Intraflagellar transport protein 27 homolog (186 aa).

GTP contacts are provided by residues 12 to 19 (GDPTVGKT), 64 to 68 (DSAGK), and 123 to 126 (NKTD).

Belongs to the small GTPase superfamily. Rab family. As to quaternary structure, component of the IFT complex B, at least composed of IFT20, IFT22, IFT25, IFT27, IFT46, IFT52, TRAF3IP1/IFT54, IFT57, IFT74, IFT80, IFT81, and IFT88. Interacts with IFT25. Interacts with IFT70B. Interacts with RABL2/RABL2A; binding is equal in the presence of GTP or GDP. Interacts with IFT88. Interacts with ARL6; recognizes and binds with the GTP-free form of ARL6.

It is found in the cell projection. The protein localises to the cilium. It localises to the cytoplasm. The protein resides in the flagellum. Its function is as follows. Small GTPase-like component of the intraflagellar transport (IFT) complex B that promotes the exit of the BBSome complex from cilia via its interaction with ARL6. Not involved in entry of the BBSome complex into cilium. Prevents aggregation of GTP-free ARL6. Required for hedgehog signaling. Forms a subcomplex within the IFT complex B with IFT25. Its role in intraflagellar transport is mainly seen in tissues rich in ciliated cells such as kidney and testis. Essential for male fertility, spermiogenesis and sperm flagella formation. Plays a role in the early development of the kidney. May be involved in the regulation of ureteric bud initiation. The polypeptide is Intraflagellar transport protein 27 homolog (IFT27) (Bos taurus (Bovine)).